A 504-amino-acid chain; its full sequence is Aspartyl/glutamyl-tRNA(Asn/Gln) amidotransferase subunit B (504 aa).

The protein belongs to the GatB/GatE family. GatB subfamily. Heterotrimer of A, B and C subunits.

It catalyses the reaction L-glutamyl-tRNA(Gln) + L-glutamine + ATP + H2O = L-glutaminyl-tRNA(Gln) + L-glutamate + ADP + phosphate + H(+). The enzyme catalyses L-aspartyl-tRNA(Asn) + L-glutamine + ATP + H2O = L-asparaginyl-tRNA(Asn) + L-glutamate + ADP + phosphate + 2 H(+). In terms of biological role, allows the formation of correctly charged Asn-tRNA(Asn) or Gln-tRNA(Gln) through the transamidation of misacylated Asp-tRNA(Asn) or Glu-tRNA(Gln) in organisms which lack either or both of asparaginyl-tRNA or glutaminyl-tRNA synthetases. The reaction takes place in the presence of glutamine and ATP through an activated phospho-Asp-tRNA(Asn) or phospho-Glu-tRNA(Gln). This chain is Aspartyl/glutamyl-tRNA(Asn/Gln) amidotransferase subunit B, found in Tropheryma whipplei (strain TW08/27) (Whipple's bacillus).